The primary structure comprises 599 residues: Elongation factor 4 (599 aa).

One can recognise a tr-type G domain in the interval 2–184 (KNIRNFSIIA…RLVRDIPPPE (183 aa)). GTP contacts are provided by residues 14-19 (DHGKST) and 131-134 (NKID).

It belongs to the TRAFAC class translation factor GTPase superfamily. Classic translation factor GTPase family. LepA subfamily.

Its subcellular location is the cell inner membrane. It catalyses the reaction GTP + H2O = GDP + phosphate + H(+). Its function is as follows. Required for accurate and efficient protein synthesis under certain stress conditions. May act as a fidelity factor of the translation reaction, by catalyzing a one-codon backward translocation of tRNAs on improperly translocated ribosomes. Back-translocation proceeds from a post-translocation (POST) complex to a pre-translocation (PRE) complex, thus giving elongation factor G a second chance to translocate the tRNAs correctly. Binds to ribosomes in a GTP-dependent manner. The chain is Elongation factor 4 from Cronobacter sakazakii (strain ATCC BAA-894) (Enterobacter sakazakii).